We begin with the raw amino-acid sequence, 231 residues long: uncharacterized protein (231 aa).

This is an uncharacterized protein from Haemophilus influenzae (strain ATCC 51907 / DSM 11121 / KW20 / Rd).